Here is a 97-residue protein sequence, read N- to C-terminus: DNA/RNA-binding protein Alba 1 (97 aa).

Serine 2 carries the post-translational modification N-acetylserine; by ard1 acetylase. Residues lysine 16, lysine 17, and tyrosine 22 each coordinate RNA. N6,N6,N6-trimethyllysine; alternate is present on lysine 16. An N6,N6-dimethyllysine; alternate modification is found at lysine 16. Residue lysine 16 is modified to N6-acetyllysine; alternate. Lysine 16 bears the N6-methyllysine; alternate mark. Deamidated asparagine; partial is present on asparagine 31. Glutamine 32 bears the Deamidated glutamine; partial mark. The residue at position 40 (lysine 40) is an N6-methyllysine; partial. Residues arginine 42 and arginine 44 each contribute to the RNA site. N6-acetyllysine; partial is present on lysine 48. At aspartate 51 the chain carries Aspartate methyl ester; partial. Residue asparagine 58 is modified to Deamidated asparagine; partial. Lysine 64 carries the N6-acetyllysine; alternate; partial modification. An N6-methyllysine; alternate; partial modification is found at lysine 64. Lysine 68 carries the post-translational modification N6-acetyllysine; partial. At glutamine 75 the chain carries N5-methylglutamine; partial. Aspartate methyl ester; partial is present on aspartate 81. Lysine 97 carries the N6-methyllysine; partial modification.

This sequence belongs to the histone-like Alba family. Forms homodimers and higher order oligomers, e.g. homotetramers. In terms of processing, acetylated. Acetylation at Lys-16 by the Pat acetylase decreases DNA-binding affinity. Deacetylation at Lys-16 by the CobB deacetylase increases DNA-binding affinity. Acetylation at Ser-2 is involved in the regulation of the turnover of the protein.

It localises to the cytoplasm. Its subcellular location is the chromosome. In terms of biological role, binds double-stranded DNA tightly but without sequence specificity. Involved in DNA compaction. Possesses DNA endonuclease activity. Prevents transcription after DNA binding. Binds single-stranded DNA and RNA in vitro. Binds rRNA and mRNA in vivo. May play a role in maintaining the structural and functional stability of RNA, and, perhaps, ribosomes. Binds double-stranded RNA (dsRNA) and exhibits RNA chaperone activity. Required for normal growth. This Saccharolobus islandicus (strain REY15A) (Sulfolobus islandicus) protein is DNA/RNA-binding protein Alba 1.